The following is a 134-amino-acid chain: Arsenate reductase (134 aa).

Catalysis depends on nucleophile residues C11, C83, and C90. Cystine bridges form between C11/C83 and C83/C90.

The protein belongs to the low molecular weight phosphotyrosine protein phosphatase family. Thioredoxin-coupled ArsC subfamily.

The protein resides in the cytoplasm. The catalysed reaction is arsenate + [thioredoxin]-dithiol + H(+) = arsenite + [thioredoxin]-disulfide + H2O. Its function is as follows. Catalyzes the reduction of arsenate [As(V)] to arsenite [As(III)]. The protein is Arsenate reductase of Bacillus cereus (strain AH187).